The primary structure comprises 170 residues: Lipocalin Cav p 2.0101 (170 aa).

Residues M1–A16 form the signal peptide. Disulfide bonds link C56/C60 and C75/C168.

The protein belongs to the calycin superfamily. Lipocalin family. In terms of processing, not N-linked glycosylated. Expressed in harderian gland (at protein level). Expressed in hair (at protein level). Expressed in submaxillary gland and harderian gland.

The protein resides in the secreted. The polypeptide is Lipocalin Cav p 2.0101 (Lcncavp2) (Cavia porcellus (Guinea pig)).